The primary structure comprises 129 residues: Probable protein cornichon homolog 2 (129 aa).

2 helical membrane-spanning segments follow: residues phenylalanine 45–leucine 65 and leucine 105–aspartate 125.

The protein belongs to the cornichon family.

The protein resides in the membrane. The polypeptide is Probable protein cornichon homolog 2 (Arabidopsis thaliana (Mouse-ear cress)).